We begin with the raw amino-acid sequence, 335 residues long: MAEKIAVIGAGSWGTTLADLLAKKGHEVTLWAYEPELVLEMRDTRENSLFLPGIKLNEGLAFTNDLAQAYRGCSMVLCVVPSQLVRRVMTNSLPFLPREAVIVSASKGIEVDTLATVSEIYQEILPPEQYRNLAALSGPSFAREVALEMPTAVTAAASTEAVARRVQEAFTTSYFRVYRNSDVVGVELGGAIKNVIAIAAGISDGLGFGSNTRAALITRGLAEMTRLGVAMGAQPSTFAGLAGMGDLVLTCTGDLSRNRSVGIQIGQGRTLSEILGEMRMVAEGVKTTESAYNLAKKLGVEMPIIEQMYQMLYQSKPAREAVLELMTRNLKAEGV.

NADPH is bound by residues serine 12, tryptophan 13, and lysine 107. Sn-glycerol 3-phosphate is bound by residues lysine 107, glycine 138, and serine 140. Alanine 142 contacts NADPH. Sn-glycerol 3-phosphate-binding residues include lysine 193, aspartate 246, serine 256, arginine 257, and asparagine 258. The active-site Proton acceptor is the lysine 193. Residue arginine 257 participates in NADPH binding. NADPH-binding residues include valine 281 and glutamate 283.

Belongs to the NAD-dependent glycerol-3-phosphate dehydrogenase family.

The protein localises to the cytoplasm. The catalysed reaction is sn-glycerol 3-phosphate + NAD(+) = dihydroxyacetone phosphate + NADH + H(+). It carries out the reaction sn-glycerol 3-phosphate + NADP(+) = dihydroxyacetone phosphate + NADPH + H(+). It functions in the pathway membrane lipid metabolism; glycerophospholipid metabolism. Its function is as follows. Catalyzes the reduction of the glycolytic intermediate dihydroxyacetone phosphate (DHAP) to sn-glycerol 3-phosphate (G3P), the key precursor for phospholipid synthesis. The sequence is that of Glycerol-3-phosphate dehydrogenase [NAD(P)+] from Geobacter sp. (strain M21).